The sequence spans 113 residues: Protein PucD (113 aa).

In terms of biological role, seems to be required for the LH-II stabilization. The protein is Protein PucD (pucD) of Rhodobacter capsulatus (Rhodopseudomonas capsulata).